A 183-amino-acid chain; its full sequence is Peptide methionine sulfoxide reductase MsrA 1 (183 aa).

Cys-12 is an active-site residue.

Belongs to the MsrA Met sulfoxide reductase family.

It catalyses the reaction L-methionyl-[protein] + [thioredoxin]-disulfide + H2O = L-methionyl-(S)-S-oxide-[protein] + [thioredoxin]-dithiol. The enzyme catalyses [thioredoxin]-disulfide + L-methionine + H2O = L-methionine (S)-S-oxide + [thioredoxin]-dithiol. Functionally, has an important function as a repair enzyme for proteins that have been inactivated by oxidation. Catalyzes the reversible oxidation-reduction of methionine sulfoxide in proteins to methionine. The polypeptide is Peptide methionine sulfoxide reductase MsrA 1 (msrA1) (Lactococcus lactis subsp. lactis (strain IL1403) (Streptococcus lactis)).